The following is a 605-amino-acid chain: NADH-ubiquinone oxidoreductase chain 5 (605 aa).

Helical transmembrane passes span 11–31 (ILIT…LPPI), 49–69 (LSLT…ISSL), 77–97 (LAMS…ALFI), 120–140 (MFLL…NFFP), 141–161 (MLVG…WWHG), 178–198 (LADI…SSLD), 202–222 (FFAT…MAAM), 244–264 (VSAL…LIGM), 273–295 (GFSE…KALL), 302–322 (IIAF…GLNH), 325–345 (LAFM…LCAG), 371–391 (ASCF…TGFF), 408–425 (LWAT…IYSL), 457–477 (LALA…PIYT), 488–508 (LAAL…ISLA), and 584–604 (IKTY…IMLF).

It belongs to the complex I subunit 5 family.

Its subcellular location is the mitochondrion inner membrane. The catalysed reaction is a ubiquinone + NADH + 5 H(+)(in) = a ubiquinol + NAD(+) + 4 H(+)(out). Core subunit of the mitochondrial membrane respiratory chain NADH dehydrogenase (Complex I) that is believed to belong to the minimal assembly required for catalysis. Complex I functions in the transfer of electrons from NADH to the respiratory chain. The immediate electron acceptor for the enzyme is believed to be ubiquinone. In Pelomedusa subrufa (African side-necked turtle), this protein is NADH-ubiquinone oxidoreductase chain 5 (MT-ND5).